Reading from the N-terminus, the 280-residue chain is Shikimate dehydrogenase (NADP(+)) (280 aa).

Shikimate is bound by residues 20-22 and Thr-67; that span reads TLS. Catalysis depends on Lys-71, which acts as the Proton acceptor. Positions 92 and 107 each coordinate shikimate. NADP(+) is bound by residues 131 to 135, 154 to 159, and Leu-224; these read GAGGA and NRTIDK. Tyr-226 lines the shikimate pocket. Residue Gly-247 coordinates NADP(+).

It belongs to the shikimate dehydrogenase family. Homodimer.

It catalyses the reaction shikimate + NADP(+) = 3-dehydroshikimate + NADPH + H(+). The protein operates within metabolic intermediate biosynthesis; chorismate biosynthesis; chorismate from D-erythrose 4-phosphate and phosphoenolpyruvate: step 4/7. Functionally, involved in the biosynthesis of the chorismate, which leads to the biosynthesis of aromatic amino acids. Catalyzes the reversible NADPH linked reduction of 3-dehydroshikimate (DHSA) to yield shikimate (SA). This chain is Shikimate dehydrogenase (NADP(+)), found in Carboxydothermus hydrogenoformans (strain ATCC BAA-161 / DSM 6008 / Z-2901).